Reading from the N-terminus, the 399-residue chain is S-adenosylmethionine synthase (399 aa).

Histidine 17 contributes to the ATP binding site. Aspartate 19 contributes to the Mg(2+) binding site. K(+) is bound at residue glutamate 45. Positions 58 and 101 each coordinate L-methionine. Positions 101-111 (QSPDIAQGVDE) are flexible loop. ATP-binding positions include 177–179 (DAK), 244–245 (RF), aspartate 253, 259–260 (RK), alanine 276, and lysine 280. An L-methionine-binding site is contributed by aspartate 253. Lysine 284 serves as a coordination point for L-methionine.

The protein belongs to the AdoMet synthase family. Homotetramer; dimer of dimers. Mg(2+) serves as cofactor. K(+) is required as a cofactor.

Its subcellular location is the cytoplasm. The catalysed reaction is L-methionine + ATP + H2O = S-adenosyl-L-methionine + phosphate + diphosphate. It participates in amino-acid biosynthesis; S-adenosyl-L-methionine biosynthesis; S-adenosyl-L-methionine from L-methionine: step 1/1. In terms of biological role, catalyzes the formation of S-adenosylmethionine (AdoMet) from methionine and ATP. The overall synthetic reaction is composed of two sequential steps, AdoMet formation and the subsequent tripolyphosphate hydrolysis which occurs prior to release of AdoMet from the enzyme. This is S-adenosylmethionine synthase from Listeria monocytogenes serovar 1/2a (strain ATCC BAA-679 / EGD-e).